Reading from the N-terminus, the 284-residue chain is MGNGWHEWPLVIFTVLGQCVVGALIVSGIGWFAAKNDADRQRIVRGMFFLWLLMGVGFIASVMHLGSPLRAFNSLNRIGASGLSNEIAAGSIFFAVGGLWWLVAVIGKMPQALGKLWLLFSMALGVIFVWMMTCVYQIDTVPTWHNGYTTLAFFLTVLLSGPILAAAILRAARVTFNTTPFAIISVLALIACAGVIVLQGLSLASIHSSVQQASALVPDYASLQVWRVVLLCAGLGCWLCPLIRRREPHVAGLILGLILILGGEMIGRVLFYGLHMTVGMAIAG.

The Periplasmic portion of the chain corresponds to 1–9 (MGNGWHEWP). Residues 10-30 (LVIFTVLGQCVVGALIVSGIG) traverse the membrane as a helical segment. Topologically, residues 31 to 45 (WFAAKNDADRQRIVR) are cytoplasmic. Residues 46 to 66 (GMFFLWLLMGVGFIASVMHLG) traverse the membrane as a helical segment. The Periplasmic segment spans residues 67–86 (SPLRAFNSLNRIGASGLSNE). Residues 87–107 (IAAGSIFFAVGGLWWLVAVIG) form a helical membrane-spanning segment. Residues 108–115 (KMPQALGK) lie on the Cytoplasmic side of the membrane. The chain crosses the membrane as a helical span at residues 116–136 (LWLLFSMALGVIFVWMMTCVY). Residues 137 to 148 (QIDTVPTWHNGY) are Periplasmic-facing. The helical transmembrane segment at 149–169 (TTLAFFLTVLLSGPILAAAIL) threads the bilayer. Over 170-180 (RAARVTFNTTP) the chain is Cytoplasmic. A helical transmembrane segment spans residues 181–201 (FAIISVLALIACAGVIVLQGL). The Periplasmic portion of the chain corresponds to 202 to 222 (SLASIHSSVQQASALVPDYAS). Residues 223 to 243 (LQVWRVVLLCAGLGCWLCPLI) traverse the membrane as a helical segment. Topologically, residues 244 to 250 (RRREPHV) are cytoplasmic. A helical membrane pass occupies residues 251–271 (AGLILGLILILGGEMIGRVLF). The Periplasmic segment spans residues 272 to 284 (YGLHMTVGMAIAG).

The protein belongs to the DmsC family. As to quaternary structure, the complex consists of three subunits: YnfF, the reductase; YnfG, an electron transfer protein, and YnfH, a membrane anchor protein.

The protein resides in the cell inner membrane. Functionally, terminal reductase during anaerobic growth on various sulfoxide and N-oxide compounds. The C subunit anchors the other two subunits to the membrane and stabilize the catalytic subunits. The protein is Anaerobic dimethyl sulfoxide reductase chain YnfH (ynfH) of Escherichia coli (strain K12).